We begin with the raw amino-acid sequence, 238 residues long: 7-carboxy-7-deazaguanine synthase (238 aa).

Substrate is bound by residues 14-16 and arginine 29; that span reads IQG. The 215-residue stretch at 20–234 folds into the Radical SAM core domain; sequence VVGQKTMFIR…PQLHALVWGN (215 aa). Residues cysteine 33, cysteine 37, and cysteine 40 each coordinate [4Fe-4S] cluster. A Mg(2+)-binding site is contributed by serine 42. Serine 80 is a binding site for substrate. Residues glycine 82 and 126–128 each bind S-adenosyl-L-methionine; that span reads SPK.

Belongs to the radical SAM superfamily. 7-carboxy-7-deazaguanine synthase family. As to quaternary structure, homodimer. It depends on [4Fe-4S] cluster as a cofactor. S-adenosyl-L-methionine is required as a cofactor. The cofactor is Mg(2+).

It carries out the reaction 6-carboxy-5,6,7,8-tetrahydropterin + H(+) = 7-carboxy-7-deazaguanine + NH4(+). It participates in purine metabolism; 7-cyano-7-deazaguanine biosynthesis. Its function is as follows. Catalyzes the complex heterocyclic radical-mediated conversion of 6-carboxy-5,6,7,8-tetrahydropterin (CPH4) to 7-carboxy-7-deazaguanine (CDG), a step common to the biosynthetic pathways of all 7-deazapurine-containing compounds. The chain is 7-carboxy-7-deazaguanine synthase from Bacillus cereus (strain ATCC 14579 / DSM 31 / CCUG 7414 / JCM 2152 / NBRC 15305 / NCIMB 9373 / NCTC 2599 / NRRL B-3711).